The primary structure comprises 288 residues: Acetyl-coenzyme A carboxylase carboxyl transferase subunit beta (288 aa).

Positions 32 to 288 constitute a CoA carboxyltransferase N-terminal domain; it reads LFAKCPACKH…LELHTEVENV (257 aa). Positions 36, 39, 54, and 57 each coordinate Zn(2+). A C4-type zinc finger spans residues 36–57; the sequence is CPACKHTIYQKDLGKNKVCPNC.

The protein belongs to the AccD/PCCB family. As to quaternary structure, acetyl-CoA carboxylase is a heterohexamer composed of biotin carboxyl carrier protein (AccB), biotin carboxylase (AccC) and two subunits each of ACCase subunit alpha (AccA) and ACCase subunit beta (AccD). It depends on Zn(2+) as a cofactor.

Its subcellular location is the cytoplasm. It carries out the reaction N(6)-carboxybiotinyl-L-lysyl-[protein] + acetyl-CoA = N(6)-biotinyl-L-lysyl-[protein] + malonyl-CoA. It participates in lipid metabolism; malonyl-CoA biosynthesis; malonyl-CoA from acetyl-CoA: step 1/1. Component of the acetyl coenzyme A carboxylase (ACC) complex. Biotin carboxylase (BC) catalyzes the carboxylation of biotin on its carrier protein (BCCP) and then the CO(2) group is transferred by the transcarboxylase to acetyl-CoA to form malonyl-CoA. The protein is Acetyl-coenzyme A carboxylase carboxyl transferase subunit beta of Lactococcus lactis subsp. lactis (strain IL1403) (Streptococcus lactis).